The chain runs to 354 residues: Isopentenyl-diphosphate delta-isomerase (354 aa).

Position 11 to 12 (11 to 12 (KK)) interacts with substrate. FMN contacts are provided by residues S67, 68–70 (SMT), S98, and N126. 98–100 (SFK) lines the substrate pocket. Q160 is a substrate binding site. A Mg(2+)-binding site is contributed by E161. Residues K192, T222, and 289–290 (AA) contribute to the FMN site.

This sequence belongs to the IPP isomerase type 2 family. As to quaternary structure, homooctamer. Dimer of tetramers. FMN is required as a cofactor. The cofactor is NADPH. Requires Mg(2+) as cofactor.

It is found in the cytoplasm. The enzyme catalyses isopentenyl diphosphate = dimethylallyl diphosphate. Its function is as follows. Involved in the biosynthesis of isoprenoids. Catalyzes the 1,3-allylic rearrangement of the homoallylic substrate isopentenyl (IPP) to its allylic isomer, dimethylallyl diphosphate (DMAPP). This is Isopentenyl-diphosphate delta-isomerase from Borrelia garinii subsp. bavariensis (strain ATCC BAA-2496 / DSM 23469 / PBi) (Borreliella bavariensis).